The following is a 524-amino-acid chain: Tubulin-specific chaperone E (524 aa).

Position 2 is an N-acetylserine (serine 2). A CAP-Gly domain is found at 27 to 71 (GAVPPVAGLWLGVEWDNPERGKHDGSHEGTMYFKCRHPTGGSFVR). LRR repeat units follow at residues 154 to 175 (NIRVVDLSKNLLSTWDEVILIA), 180 to 201 (DLEALDLSENKLQFPSDSPTLT), 206 to 227 (TLKTLVLNKTGITWTEVLHCAP), 231 to 253 (VLQELYLKSNGISISERPVNALQ), 254 to 273 (NLRLLDLSSNPSIDESQLCL), 279 to 300 (RLEHLLLSDIGLSSIHFPDAEI), and 309 to 330 (ALTYLIVNDNQISEWSFINELD). The 39-residue stretch at 343–381 (NPLTKGDKAEEIIIAKIGQLKTLNRCQILPEERRGAELD) folds into the LRRCT domain. Lysine 460 bears the N6-acetyllysine mark. Serine 492 bears the Phosphoserine mark.

The protein belongs to the TBCE family. Supercomplex made of cofactors A to E. Cofactors A and D function by capturing and stabilizing tubulin in a quasi-native conformation. Cofactor E binds to the cofactor D-tubulin complex; interaction with cofactor C then causes the release of tubulin polypeptides that are committed to the native state. Cofactors B and E can form a heterodimer which binds to alpha-tubulin and enhances their ability to dissociate tubulin heterodimers. Interacts with TBCD.

The protein resides in the cytoplasm. Its subcellular location is the cytoskeleton. Functionally, tubulin-folding protein; involved in the second step of the tubulin folding pathway and in the regulation of tubulin heterodimer dissociation. Required for correct organization of microtubule cytoskeleton and mitotic splindle, and maintenance of the neuronal microtubule network. The polypeptide is Tubulin-specific chaperone E (Tbce) (Rattus norvegicus (Rat)).